Here is a 295-residue protein sequence, read N- to C-terminus: Forkhead box protein N5 (295 aa).

Residues 119 to 146 (STVEDSEDEAPTSCSDLMTDDDNDDSYN) form a disordered region. The segment at residues 178-275 (RPPLNYCNLI…NEMHALSDDL (98 aa)) is a DNA-binding region (fork-head).

In terms of tissue distribution, ubiquitously expressed in early cleavage stage and gastrula stage embryos.

It is found in the nucleus. The polypeptide is Forkhead box protein N5 (Xenopus laevis (African clawed frog)).